Consider the following 126-residue polypeptide: Profilin (126 aa).

Belongs to the profilin family. In terms of assembly, occurs in many kinds of cells as a complex with monomeric actin in a 1:1 ratio. In terms of tissue distribution, expressed in ovary and head.

It localises to the cytoplasm. Its subcellular location is the cytoskeleton. Functionally, binds to actin and affects the structure of the cytoskeleton. At high concentrations, profilin prevents the polymerization of actin, whereas it enhances it at low concentrations. By binding to PIP2, it may inhibit the formation of IP3 and DG. This profilin is required for intercellular cytoplasm transport during Drosophila oogenesis. Function in neurons is essential for adult survival, and is important for climbing behavior and activity. This is Profilin (chic) from Drosophila melanogaster (Fruit fly).